The primary structure comprises 266 residues: Putative carbamate hydrolase RutD (266 aa).

This sequence belongs to the AB hydrolase superfamily. Hydrolase RutD family.

The enzyme catalyses carbamate + 2 H(+) = NH4(+) + CO2. In terms of biological role, involved in pyrimidine catabolism. May facilitate the hydrolysis of carbamate, a reaction that can also occur spontaneously. This is Putative carbamate hydrolase RutD from Escherichia coli O157:H7.